Here is a 343-residue protein sequence, read N- to C-terminus: Probable dolichyl-diphosphooligosaccharide--protein glycosyltransferase subunit 3A (343 aa).

A signal peptide spans 1-22 (MVIQTNLSYRFFILIVFLFTLA). The Lumenal segment spans residues 23–185 (NPKSDSDLKN…TVCSIQRPPL (163 aa)). N-linked (GlcNAc...) asparagine glycans are attached at residues Asn-105, Asn-108, and Asn-146. Residues 186-206 (ISKTQIGIIVAIIIISTPILI) traverse the membrane as a helical segment. Residues 207–220 (KKILKGETLLHDHR) are Cytoplasmic-facing. The chain crosses the membrane as a helical span at residues 221–241 (IWLVGAVFVYFFSVSGTMHNI). The Lumenal portion of the chain corresponds to 242 to 273 (IREMPMYIKDYEDSSKFVFFIEESEMQLGAEG). A helical membrane pass occupies residues 274 to 294 (FFVGFLYTVVGLLLAFVTNVV). At 295-304 (VRVKKLDEQR) the chain is on the cytoplasmic side. The helical transmembrane segment at 305-325 (MAMLLALSISFWAVRKVVYLD) threads the bilayer. Over 326–343 (NWKTGYEIYPYWPSSWRG) the chain is Lumenal.

It belongs to the OST3/OST6 family. As to quaternary structure, component of the oligosaccharyltransferase (OST) complex.

Its subcellular location is the endoplasmic reticulum membrane. Its function is as follows. Subunit of the oligosaccharyl transferase (OST) complex that catalyzes the initial transfer of a defined glycan (Glc(3)Man(9)GlcNAc(2) in eukaryotes) from the lipid carrier dolichol-pyrophosphate to an asparagine residue within an Asn-X-Ser/Thr consensus motif in nascent polypeptide chains, the first step in protein N-glycosylation. N-glycosylation occurs cotranslationally and the complex associates with the Sec61 complex at the channel-forming translocon complex that mediates protein translocation across the endoplasmic reticulum (ER). All subunits are required for a maximal enzyme activity. This is Probable dolichyl-diphosphooligosaccharide--protein glycosyltransferase subunit 3A (OST3A) from Arabidopsis thaliana (Mouse-ear cress).